A 119-amino-acid chain; its full sequence is Urotensin-2B (119 aa).

Positions 1–28 (MNKILSSTVCFGLLTLLSVLSFLQSVHG) are cleaved as a signal peptide. The propeptide occupies 29-109 (RPYLTQGNEI…VDGLFSSHPS (81 aa)). A disulfide bridge links cysteine 113 with cysteine 118.

Belongs to the urotensin-2 family.

Its subcellular location is the secreted. Functionally, potent vasoconstrictor. The polypeptide is Urotensin-2B (UTS2B) (Homo sapiens (Human)).